The following is a 128-amino-acid chain: MAYVKERIYESMFIIAPNVPEEERENLVERVKKIIEERVKGKIEKVERMGMRKFAYEIKKFSEGDYTVIYFRCDGQNLQELENFYRVTPEIIRWQTFRRFDLEKKERKAQREKAAAEAVETGEGGSEA.

It belongs to the bacterial ribosomal protein bS6 family.

In terms of biological role, binds together with bS18 to 16S ribosomal RNA. This Thermotoga petrophila (strain ATCC BAA-488 / DSM 13995 / JCM 10881 / RKU-1) protein is Small ribosomal subunit protein bS6.